We begin with the raw amino-acid sequence, 385 residues long: 1-deoxy-D-xylulose 5-phosphate reductoisomerase (385 aa).

Residues threonine 10, glycine 11, serine 12, isoleucine 13, glycine 36, asparagine 38, and asparagine 122 each coordinate NADPH. 1-deoxy-D-xylulose 5-phosphate is bound at residue lysine 123. Position 124 (glutamate 124) interacts with NADPH. Aspartate 148 provides a ligand contact to Mn(2+). Positions 149, 150, 174, and 197 each coordinate 1-deoxy-D-xylulose 5-phosphate. Glutamate 150 is a binding site for Mn(2+). Glycine 203 provides a ligand contact to NADPH. Residues serine 210, asparagine 215, lysine 216, and glutamate 219 each coordinate 1-deoxy-D-xylulose 5-phosphate. Position 219 (glutamate 219) interacts with Mn(2+).

It belongs to the DXR family. It depends on Mg(2+) as a cofactor. Mn(2+) serves as cofactor.

It carries out the reaction 2-C-methyl-D-erythritol 4-phosphate + NADP(+) = 1-deoxy-D-xylulose 5-phosphate + NADPH + H(+). The protein operates within isoprenoid biosynthesis; isopentenyl diphosphate biosynthesis via DXP pathway; isopentenyl diphosphate from 1-deoxy-D-xylulose 5-phosphate: step 1/6. Catalyzes the NADPH-dependent rearrangement and reduction of 1-deoxy-D-xylulose-5-phosphate (DXP) to 2-C-methyl-D-erythritol 4-phosphate (MEP). In Geobacter sp. (strain M21), this protein is 1-deoxy-D-xylulose 5-phosphate reductoisomerase.